A 68-amino-acid polypeptide reads, in one-letter code: Cold shock-like protein CspA (68 aa).

A CSD domain is found at 4–64; it reads GTVKWFNDAK…GPKGLQAQNV (61 aa).

It is found in the cytoplasm. This chain is Cold shock-like protein CspA (cspA), found in Stigmatella aurantiaca (strain DW4/3-1).